The sequence spans 776 residues: Protein SEY1 (776 aa).

Residues 1-681 lie on the Cytoplasmic side of the membrane; that stretch reads MADRSAIQLI…KRSIITTRTH (681 aa). Residues 34–263 enclose the GB1/RHD3-type G domain; sequence GLDYHVISVF…TENYYFKPQY (230 aa). 44 to 51 lines the GTP pocket; it reads GSQSSGKS. A helical transmembrane segment spans residues 682 to 702; sequence IPPWIYVLLAVLGWNEFVAVI. Residues 703–705 are Lumenal-facing; it reads RNP. Residues 706–726 form a helical membrane-spanning segment; it reads LFVTLTLILGATFFVIHKFGL. Residues 727–776 are Cytoplasmic-facing; that stretch reads WGPVVNVVQSAVGETRTAIKDKLRQFVVEDHEVKESFEMKDFSKNEQKEK.

Belongs to the TRAFAC class dynamin-like GTPase superfamily. GB1/RHD3 GTPase family. RHD3 subfamily. In terms of assembly, interacts with RTN1 and YOP1; GTP binding is not required for these interactions.

Its subcellular location is the endoplasmic reticulum membrane. In terms of biological role, cooperates with the reticulon proteins RTN1 and RTN2 and the tubule-shaping DP1 family protein YOP1 to generate and maintain the structure of the tubular endoplasmic reticulum network. Has GTPase activity, which is required for its function in ER organization. This chain is Protein SEY1, found in Saccharomyces cerevisiae (strain AWRI1631) (Baker's yeast).